A 176-amino-acid polypeptide reads, in one-letter code: Peptidoglycan-associated lipoprotein (176 aa).

Residues 1 to 32 (MSRIDTPAASRMQTIARNPVMIALVMTLALAG) form the signal peptide. Cysteine 33 is lipidated: N-palmitoyl cysteine. Cysteine 33 carries S-diacylglycerol cysteine lipidation. The region spanning 58–175 (QQDFTVNVGD…RAVTVLGGAG (118 aa)) is the OmpA-like domain.

The protein belongs to the Pal lipoprotein family. As to quaternary structure, the Tol-Pal system is composed of five core proteins: the inner membrane proteins TolA, TolQ and TolR, the periplasmic protein TolB and the outer membrane protein Pal. They form a network linking the inner and outer membranes and the peptidoglycan layer.

The protein localises to the cell outer membrane. Functionally, part of the Tol-Pal system, which plays a role in outer membrane invagination during cell division and is important for maintaining outer membrane integrity. This Rhizobium meliloti (strain 1021) (Ensifer meliloti) protein is Peptidoglycan-associated lipoprotein.